The following is a 221-amino-acid chain: Protein-L-isoaspartate O-methyltransferase (221 aa).

S60 is a catalytic residue.

The protein belongs to the methyltransferase superfamily. L-isoaspartyl/D-aspartyl protein methyltransferase family.

The protein localises to the cytoplasm. The enzyme catalyses [protein]-L-isoaspartate + S-adenosyl-L-methionine = [protein]-L-isoaspartate alpha-methyl ester + S-adenosyl-L-homocysteine. In terms of biological role, catalyzes the methyl esterification of L-isoaspartyl residues in peptides and proteins that result from spontaneous decomposition of normal L-aspartyl and L-asparaginyl residues. It plays a role in the repair and/or degradation of damaged proteins. The polypeptide is Protein-L-isoaspartate O-methyltransferase (Rhodospirillum centenum (strain ATCC 51521 / SW)).